Reading from the N-terminus, the 239-residue chain is Sugar fermentation stimulation protein homolog (239 aa).

This sequence belongs to the SfsA family.

This chain is Sugar fermentation stimulation protein homolog, found in Sinorhizobium medicae (strain WSM419) (Ensifer medicae).